The primary structure comprises 300 residues: MEFGRLITAMVTPFNDRLEVDYVRAAELANHLVNTGSDGIVVAGTTGESPTLTKDEKIRLFSTVVDAVGDRASVIAGTGSYDTEATIELSRKAKEAGVDGLLLVGPYYNKPPQEGYYQHFAAVAKAVPLPIMLYNIPGRTGSNIIPATVARLMAFDNIVAIKEAAGSMDQVSEVVRLARPDFKVYSGDDSLTLPILSVGGHGIVSVASHLVGKEIQKMIAACINGNISEAARIHRELYPLFKGLFITSNPICVKAALNLLGRPVGGVRLPLVEANDQEVAAMRQLIESYGLDASCQETVA.

Position 46 (Thr-46) interacts with pyruvate. Tyr-134 acts as the Proton donor/acceptor in catalysis. The Schiff-base intermediate with substrate role is filled by Lys-162. Val-204 provides a ligand contact to pyruvate.

It belongs to the DapA family. As to quaternary structure, homotetramer; dimer of dimers.

It localises to the cytoplasm. It catalyses the reaction L-aspartate 4-semialdehyde + pyruvate = (2S,4S)-4-hydroxy-2,3,4,5-tetrahydrodipicolinate + H2O + H(+). Its pathway is amino-acid biosynthesis; L-lysine biosynthesis via DAP pathway; (S)-tetrahydrodipicolinate from L-aspartate: step 3/4. In terms of biological role, catalyzes the condensation of (S)-aspartate-beta-semialdehyde [(S)-ASA] and pyruvate to 4-hydroxy-tetrahydrodipicolinate (HTPA). The sequence is that of 4-hydroxy-tetrahydrodipicolinate synthase from Heliobacterium modesticaldum (strain ATCC 51547 / Ice1).